The following is a 91-amino-acid chain: MKLAITITLAILALCCSPASAEICQSFADIIQGLFLGTPASFEAAVEPFKPDADMKAATTQLKTLVDFLPKNTKDSILKLMDKIAKSPLCA.

Positions 1-21 are cleaved as a signal peptide; it reads MKLAITITLAILALCCSPASA.

This sequence belongs to the secretoglobin family. In terms of assembly, antiparallel homodimer; disulfide-linked. Interaction with LMBR1L is controversial. In terms of tissue distribution, club cells (nonciliated cells of the surface epithelium of the pulmonary airways). Expressed in lung, uterus, and prostate.

Its subcellular location is the secreted. In terms of biological role, binds phosphatidylcholine, phosphatidylinositol, polychlorinated biphenyls (PCB) and weakly progesterone, potent inhibitor of phospholipase A2. The chain is Uteroglobin (SCGB1A1) from Equus caballus (Horse).